Consider the following 148-residue polypeptide: Lysozyme-like protein 6 (148 aa).

The first 19 residues, 1–19 (MTKALLIYLVSSFLALNQA), serve as a signal peptide directing secretion. A C-type lysozyme domain is found at 20–148 (SLISRCDLAQ…FYWLTGCRLR (129 aa)). Disulfide bonds link cysteine 25-cysteine 145, cysteine 49-cysteine 133, cysteine 83-cysteine 98, and cysteine 94-cysteine 112. Active-site residues include glutamate 54 and aspartate 71.

Belongs to the glycosyl hydrolase 22 family. In terms of assembly, monomer. As to expression, expressed in testis, epididymis and spermatozoa (at protein level). Expressed in late-stage spermatocytes and round spermatids.

It localises to the secreted. The protein localises to the cell surface. The protein resides in the cell projection. Its subcellular location is the cilium. It is found in the flagellum. The enzyme catalyses Hydrolysis of (1-&gt;4)-beta-linkages between N-acetylmuramic acid and N-acetyl-D-glucosamine residues in a peptidoglycan and between N-acetyl-D-glucosamine residues in chitodextrins.. Functionally, may be involved sperm-egg plasma membrane adhesion and fusion during fertilization. Exhibits bacteriolytic activity in vitro against Micrococcus luteus and Staphylococcus aureus. Shows weak bacteriolytic activity against Gram-positive bacteria at physiological pH. Bacteriolytic activity is pH-dependent, with a maximum at around pH 5.6. This Homo sapiens (Human) protein is Lysozyme-like protein 6 (LYZL6).